A 385-amino-acid chain; its full sequence is Iron uptake system component EfeM (385 aa).

Residues methionine 1–alanine 22 form the signal peptide.

This sequence belongs to the EfeM/EfeO family. In terms of assembly, component of the iron transporter efeUOB/M complex composed of EfeU, EfeM and EfeB; EfeU is essential for the complex formation.

Its subcellular location is the cell membrane. The protein localises to the membrane raft. Its function is as follows. Part of the iron transporter system efeUOB/M involved in iron import. Specifically binds Fe(3+), which is produced by EfeB-mediated oxidation of Fe(2+), and delivers it to the cell membrane permease EfeU. The protein is Iron uptake system component EfeM of Bacillus subtilis (strain 168).